The following is a 577-amino-acid chain: Sulfite reductase [NADPH] hemoprotein beta-component (577 aa).

Cysteine 436, cysteine 442, cysteine 481, and cysteine 485 together coordinate [4Fe-4S] cluster. Cysteine 485 is a binding site for siroheme.

Belongs to the nitrite and sulfite reductase 4Fe-4S domain family. In terms of assembly, alpha(8)-beta(8). The alpha component is a flavoprotein, the beta component is a hemoprotein. Requires siroheme as cofactor. [4Fe-4S] cluster is required as a cofactor.

The enzyme catalyses hydrogen sulfide + 3 NADP(+) + 3 H2O = sulfite + 3 NADPH + 4 H(+). It participates in sulfur metabolism; hydrogen sulfide biosynthesis; hydrogen sulfide from sulfite (NADPH route): step 1/1. In terms of biological role, component of the sulfite reductase complex that catalyzes the 6-electron reduction of sulfite to sulfide. This is one of several activities required for the biosynthesis of L-cysteine from sulfate. This is Sulfite reductase [NADPH] hemoprotein beta-component from Shewanella woodyi (strain ATCC 51908 / MS32).